Reading from the N-terminus, the 245-residue chain is 1-(5-phosphoribosyl)-5-[(5-phosphoribosylamino)methylideneamino] imidazole-4-carboxamide isomerase (245 aa).

D8 acts as the Proton acceptor in catalysis. D129 functions as the Proton donor in the catalytic mechanism.

It belongs to the HisA/HisF family.

The protein resides in the cytoplasm. The catalysed reaction is 1-(5-phospho-beta-D-ribosyl)-5-[(5-phospho-beta-D-ribosylamino)methylideneamino]imidazole-4-carboxamide = 5-[(5-phospho-1-deoxy-D-ribulos-1-ylimino)methylamino]-1-(5-phospho-beta-D-ribosyl)imidazole-4-carboxamide. The protein operates within amino-acid biosynthesis; L-histidine biosynthesis; L-histidine from 5-phospho-alpha-D-ribose 1-diphosphate: step 4/9. This is 1-(5-phosphoribosyl)-5-[(5-phosphoribosylamino)methylideneamino] imidazole-4-carboxamide isomerase from Rhodopseudomonas palustris (strain BisB18).